A 556-amino-acid polypeptide reads, in one-letter code: MKTDIEIAQSIELKPIVDVVEKLGISYDDLELYGKYKAKLSFDKIRAVESNPVGKLILVTAINPTPAGEGKSTLTIGLADALNKIGKKTMIAIREPSLGPVMGIKGGAAGGGYAQVLPMEDINLHFTGDMHAITTANNALSALIDNHLHQGNELGIDQRRILWKRVVDLNDRALRHVTVGLGGPLNGIPREDGFDITVASEIMAILCLATDIEDLKRRLANIVIGYRYDRTPVSVGDLQVEGALALILKDAIKPNLVQTIYGTPAFVHGGPFANIAHGCNSVLATTTALHLADYTVTEAGFGADLGAEKFLDIKTPNLPTSPDAVVIVATLRALKMNGGVAKDALTEENVEAVRAGFANLKRHVENIRKFGIPAVVAINEFVSDTEAEIAVLKELCASIDVPVELASVWADGAEGGVALAETVVKTIAENPANYKRLYDNDLSVQEKIEKIVTEIYRGSKVNFEKKSQTQIAQIVQNGWDKLPICMAKTQYSFSDNPNALGAPENFEITIRELVPKLGAGFIVALTGDVMTMPGLPKRPAALNMDVESDGTVLGLF.

65-72 lines the ATP pocket; that stretch reads TPAGEGKS.

It belongs to the formate--tetrahydrofolate ligase family.

The catalysed reaction is (6S)-5,6,7,8-tetrahydrofolate + formate + ATP = (6R)-10-formyltetrahydrofolate + ADP + phosphate. It participates in one-carbon metabolism; tetrahydrofolate interconversion. This Streptococcus pneumoniae (strain ATCC 700669 / Spain 23F-1) protein is Formate--tetrahydrofolate ligase.